The sequence spans 490 residues: Betaine aldehyde dehydrogenase (490 aa).

Residues Thr-26, Ile-27, and Asp-93 each coordinate K(+). 150-152 (GAW) lines the NAD(+) pocket. Catalysis depends on Lys-162, which acts as the Charge relay system. 176-179 (KPSE) contacts NAD(+). Val-180 is a binding site for K(+). 230 to 233 (GTST) is an NAD(+) binding site. Leu-246 contacts K(+). Residue Glu-252 is the Proton acceptor of the active site. Positions 254, 286, and 387 each coordinate NAD(+). Residue Cys-286 is the Nucleophile of the active site. A Cysteine sulfenic acid (-SOH) modification is found at Cys-286. Residues Lys-457 and Gly-460 each coordinate K(+). The active-site Charge relay system is the Glu-464.

It belongs to the aldehyde dehydrogenase family. In terms of assembly, dimer of dimers. Requires K(+) as cofactor.

It carries out the reaction betaine aldehyde + NAD(+) + H2O = glycine betaine + NADH + 2 H(+). It participates in amine and polyamine biosynthesis; betaine biosynthesis via choline pathway; betaine from betaine aldehyde: step 1/1. In terms of biological role, involved in the biosynthesis of the osmoprotectant glycine betaine. Catalyzes the irreversible oxidation of betaine aldehyde to the corresponding acid. In Pseudomonas paraeruginosa (strain DSM 24068 / PA7) (Pseudomonas aeruginosa (strain PA7)), this protein is Betaine aldehyde dehydrogenase.